A 159-amino-acid polypeptide reads, in one-letter code: tRNA-specific adenosine deaminase (159 aa).

The CMP/dCMP-type deaminase domain maps to 6–133 (EEQTYFMQEA…ERLNHRVQVE (128 aa)). Zn(2+) is bound at residue His57. Glu59 serves as the catalytic Proton donor. Residues Cys87 and Cys90 each contribute to the Zn(2+) site.

This sequence belongs to the cytidine and deoxycytidylate deaminase family. Homodimer. The cofactor is Zn(2+).

The catalysed reaction is adenosine(34) in tRNA + H2O + H(+) = inosine(34) in tRNA + NH4(+). Its function is as follows. Catalyzes the deamination of adenosine to inosine at the wobble position 34 of tRNA(Arg2). In Streptococcus pyogenes serotype M18 (strain MGAS8232), this protein is tRNA-specific adenosine deaminase.